The chain runs to 302 residues: Homoserine O-acetyltransferase (302 aa).

The active-site Acyl-thioester intermediate is cysteine 142. 2 residues coordinate substrate: lysine 163 and serine 192. Residue histidine 235 is the Proton acceptor of the active site. Glutamate 237 is a catalytic residue. A substrate-binding site is contributed by arginine 249.

The protein belongs to the MetA family.

The protein resides in the cytoplasm. The catalysed reaction is L-homoserine + acetyl-CoA = O-acetyl-L-homoserine + CoA. It functions in the pathway amino-acid biosynthesis; L-methionine biosynthesis via de novo pathway; O-acetyl-L-homoserine from L-homoserine: step 1/1. In terms of biological role, transfers an acetyl group from acetyl-CoA to L-homoserine, forming acetyl-L-homoserine. This Geobacillus sp. (strain WCH70) protein is Homoserine O-acetyltransferase.